The chain runs to 121 residues: Flagellar protein FliT (121 aa).

The segment at 1 to 50 (MNNAPHLYFAWQQLVEKSQLMLRLATEEQWDELIASEMAYVNAVQEIAHL) is required for homodimerization. The tract at residues 60–98 (MQEQLRPMLRLILDNESKVKQLLQIRMDELAKLVGQSSV) is fliD binding.

It belongs to the FliT family. As to quaternary structure, homodimer. Interacts with FliD and FlhC.

The protein resides in the cytoplasm. It is found in the cytosol. Functionally, dual-function protein that regulates the transcription of class 2 flagellar operons and that also acts as an export chaperone for the filament-capping protein FliD. As a transcriptional regulator, acts as an anti-FlhDC factor; it directly binds FlhC, thus inhibiting the binding of the FlhC/FlhD complex to class 2 promoters, resulting in decreased expression of class 2 flagellar operons. As a chaperone, effects FliD transition to the membrane by preventing its premature polymerization, and by directing it to the export apparatus. The sequence is that of Flagellar protein FliT from Escherichia coli O9:H4 (strain HS).